A 539-amino-acid polypeptide reads, in one-letter code: O-phosphoserine--tRNA(Cys) ligase (539 aa).

Substrate contacts are provided by residues 188 to 190 (HMT), 233 to 235 (SAS), 275 to 276 (YY), and Asn-327.

It belongs to the class-II aminoacyl-tRNA synthetase family. O-phosphoseryl-tRNA(Cys) synthetase subfamily. Homotetramer. Interacts with SepCysS.

It carries out the reaction tRNA(Cys) + O-phospho-L-serine + ATP = O-phospho-L-seryl-tRNA(Cys) + AMP + diphosphate. Catalyzes the attachment of O-phosphoserine (Sep) to tRNA(Cys). This is O-phosphoserine--tRNA(Cys) ligase from Methanosarcina mazei (strain ATCC BAA-159 / DSM 3647 / Goe1 / Go1 / JCM 11833 / OCM 88) (Methanosarcina frisia).